The following is a 469-amino-acid chain: Glutamate--tRNA ligase 2 (469 aa).

The 'HIGH' region signature appears at Pro10–Gly20. Residues Cys99, Cys101, Cys126, and Asp128 each coordinate Zn(2+). Residues Arg237–Arg241 carry the 'KMSKS' region motif. Lys240 is a binding site for ATP.

Belongs to the class-I aminoacyl-tRNA synthetase family. Glutamate--tRNA ligase type 1 subfamily. As to quaternary structure, monomer. Requires Zn(2+) as cofactor.

It is found in the cytoplasm. The enzyme catalyses tRNA(Glu) + L-glutamate + ATP = L-glutamyl-tRNA(Glu) + AMP + diphosphate. In terms of biological role, catalyzes the attachment of glutamate to tRNA(Glu) in a two-step reaction: glutamate is first activated by ATP to form Glu-AMP and then transferred to the acceptor end of tRNA(Glu). This is Glutamate--tRNA ligase 2 from Coxiella burnetii (strain CbuG_Q212) (Coxiella burnetii (strain Q212)).